We begin with the raw amino-acid sequence, 45 residues long: Large ribosomal subunit protein bL34 (45 aa).

The span at 1 to 10 (MTQRTLGGTN) shows a compositional bias: polar residues. The tract at residues 1-45 (MTQRTLGGTNRKQKRTSGFRARMRTHNGRKVIQARRSKGRHRLAV) is disordered. The segment covering 11–45 (RKQKRTSGFRARMRTHNGRKVIQARRSKGRHRLAV) has biased composition (basic residues).

Belongs to the bacterial ribosomal protein bL34 family.

The chain is Large ribosomal subunit protein bL34 (rpmH) from Synechocystis sp. (strain ATCC 27184 / PCC 6803 / Kazusa).